A 637-amino-acid polypeptide reads, in one-letter code: Serine/threonine-protein kinase Nek11 (637 aa).

In terms of domain architecture, Protein kinase spans 29–287 (YVLQQKLGSG…AIEILKIPYI (259 aa)). Residues 35 to 43 (LGSGSFGTV) and Lys61 each bind ATP. Asp158 (proton acceptor) is an active-site residue. At Ser273 the chain carries Phosphoserine; by CHEK1. Residues 302–385 (TLEDKNLDCQ…QELRSRNFQQ (84 aa)) are a coiled coil. A disordered region spans residues 399 to 446 (GMEEKEEQPEGRPSCSPQDEDEERWQDREEEFDEPTLENLSEPQPIPS). A compositionally biased stretch (acidic residues) spans 416–434 (QDEDEERWQDREEEFDEPT).

This sequence belongs to the protein kinase superfamily. NEK Ser/Thr protein kinase family. NIMA subfamily. In terms of assembly, interacts with NEK2. It depends on Mn(2+) as a cofactor. Mg(2+) is required as a cofactor. In terms of processing, phosphorylated by NEK2. Phosphorylation at Ser-273 is important for its activation.

It localises to the nucleus. Its subcellular location is the nucleolus. It carries out the reaction L-seryl-[protein] + ATP = O-phospho-L-seryl-[protein] + ADP + H(+). It catalyses the reaction L-threonyl-[protein] + ATP = O-phospho-L-threonyl-[protein] + ADP + H(+). Autorepressed by intramolecular binding of the C-terminus which dissociates following phosphorylation by NEK2. Activated in response to DNA damage. Inhibited by zinc. Its function is as follows. Protein kinase which plays an important role in the G2/M checkpoint response to DNA damage. Controls degradation of CDC25A by directly phosphorylating it on residues whose phosphorylation is required for BTRC-mediated polyubiquitination and degradation. In Macaca fascicularis (Crab-eating macaque), this protein is Serine/threonine-protein kinase Nek11 (NEK11).